A 94-amino-acid chain; its full sequence is Large ribosomal subunit protein uL23c (94 aa).

It belongs to the universal ribosomal protein uL23 family. As to quaternary structure, part of the 50S ribosomal subunit.

It localises to the plastid. Its subcellular location is the chloroplast. Functionally, binds to 23S rRNA. This chain is Large ribosomal subunit protein uL23c (rpl23), found in Tupiella akineta (Green alga).